The chain runs to 142 residues: Negative cofactor 2 complex subunit alpha (142 aa).

The span at M1–L11 shows a compositional bias: polar residues. Residues M1–G43 form a disordered region. S27 carries the phosphoserine modification. One can recognise a Histone-fold domain in the interval V29–P137. S141 is modified (phosphoserine).

This sequence belongs to the NC2 alpha/DRAP1 family. In terms of assembly, component of the NC2 (negative cofactor 2) complex composed of BUR6 and NCB2. The NC2 complex associates with SPT15/TBP. Interacts with SPT15/TBP.

It is found in the nucleus. Functionally, component of the NC2 complex which represses RNA polymerase II transcription through binding to SPT15/TBP and thereby inhibiting the assembly of the preinitiation complex. The NC2 complex may also mediate transcriptional activation from TATA-driven promoters through association with SPT15/TBP. The polypeptide is Negative cofactor 2 complex subunit alpha (BUR6) (Saccharomyces cerevisiae (strain ATCC 204508 / S288c) (Baker's yeast)).